A 61-amino-acid chain; its full sequence is Protein MATERNALLY EXPRESSED GENE 6 (61 aa).

The cysteines at positions 38 and 60 are disulfide-linked.

It belongs to the MEG family. Ubiquitous.

The protein is Protein MATERNALLY EXPRESSED GENE 6 (MEG6) of Zea mays (Maize).